Consider the following 130-residue polypeptide: Small ribosomal subunit protein uS8 (130 aa).

It belongs to the universal ribosomal protein uS8 family. In terms of assembly, part of the 30S ribosomal subunit. Contacts proteins S5 and S12.

Functionally, one of the primary rRNA binding proteins, it binds directly to 16S rRNA central domain where it helps coordinate assembly of the platform of the 30S subunit. The polypeptide is Small ribosomal subunit protein uS8 (Shewanella baltica (strain OS223)).